A 439-amino-acid chain; its full sequence is Chromosomal replication initiator protein DnaA (439 aa).

The tract at residues 1 to 75 is domain I, interacts with DnaA modulators; it reads MESWSRCLER…GIREVVLAIG (75 aa). Residues 75–101 are domain II; the sequence is GSRPKTTELPVPVDTTGRLSSTVPFNG. The tract at residues 102–319 is domain III, AAA+ region; it reads NLDTHYNFDN…GALNTLVARA (218 aa). 4 residues coordinate ATP: G147, G149, K150, and T151. The segment at 320–439 is domain IV, binds dsDNA; it reads NFTGRAVTIE…WDKLMRKFSE (120 aa).

It belongs to the DnaA family. Oligomerizes as a right-handed, spiral filament on DNA at oriC.

It localises to the cytoplasm. Its function is as follows. Plays an essential role in the initiation and regulation of chromosomal replication. ATP-DnaA binds to the origin of replication (oriC) to initiate formation of the DNA replication initiation complex once per cell cycle. Binds the DnaA box (a 9 base pair repeat at the origin) and separates the double-stranded (ds)DNA. Forms a right-handed helical filament on oriC DNA; dsDNA binds to the exterior of the filament while single-stranded (ss)DNA is stabiized in the filament's interior. The ATP-DnaA-oriC complex binds and stabilizes one strand of the AT-rich DNA unwinding element (DUE), permitting loading of DNA polymerase. After initiation quickly degrades to an ADP-DnaA complex that is not apt for DNA replication. Binds acidic phospholipids. The sequence is that of Chromosomal replication initiator protein DnaA from Xylella fastidiosa (strain 9a5c).